A 391-amino-acid polypeptide reads, in one-letter code: Na(+)/H(+) antiporter NhaA 1 (391 aa).

Helical transmembrane passes span 25–45 (AGGI…NSPL), 56–76 (VWLG…IFFL), 98–118 (ALPG…YIAI), 128–148 (GWAI…SLLG), 157–177 (VFLA…IAFF), 180–200 (AGLN…LIVM), 208–228 (LLPY…SGVH), 264–284 (VAFA…LAGI), 297–317 (VALG…VLAI), 335–355 (GVAM…NLAF), and 364–384 (EVKV…IVLL).

The protein belongs to the NhaA Na(+)/H(+) (TC 2.A.33) antiporter family.

The protein resides in the cell inner membrane. The enzyme catalyses Na(+)(in) + 2 H(+)(out) = Na(+)(out) + 2 H(+)(in). Functionally, na(+)/H(+) antiporter that extrudes sodium in exchange for external protons. The sequence is that of Na(+)/H(+) antiporter NhaA 1 from Pseudomonas syringae pv. syringae (strain B728a).